Reading from the N-terminus, the 198-residue chain is Imidazoleglycerol-phosphate dehydratase (198 aa).

Belongs to the imidazoleglycerol-phosphate dehydratase family.

The protein localises to the cytoplasm. The enzyme catalyses D-erythro-1-(imidazol-4-yl)glycerol 3-phosphate = 3-(imidazol-4-yl)-2-oxopropyl phosphate + H2O. It participates in amino-acid biosynthesis; L-histidine biosynthesis; L-histidine from 5-phospho-alpha-D-ribose 1-diphosphate: step 6/9. The sequence is that of Imidazoleglycerol-phosphate dehydratase from Nitratidesulfovibrio vulgaris (strain DP4) (Desulfovibrio vulgaris).